Here is a 291-residue protein sequence, read N- to C-terminus: Bifunctional protein FolD (291 aa).

Residues 168–170 (GRG), threonine 195, and valine 236 contribute to the NADP(+) site.

This sequence belongs to the tetrahydrofolate dehydrogenase/cyclohydrolase family. As to quaternary structure, homodimer.

It catalyses the reaction (6R)-5,10-methylene-5,6,7,8-tetrahydrofolate + NADP(+) = (6R)-5,10-methenyltetrahydrofolate + NADPH. The catalysed reaction is (6R)-5,10-methenyltetrahydrofolate + H2O = (6R)-10-formyltetrahydrofolate + H(+). Its pathway is one-carbon metabolism; tetrahydrofolate interconversion. Functionally, catalyzes the oxidation of 5,10-methylenetetrahydrofolate to 5,10-methenyltetrahydrofolate and then the hydrolysis of 5,10-methenyltetrahydrofolate to 10-formyltetrahydrofolate. In Bifidobacterium longum (strain DJO10A), this protein is Bifunctional protein FolD.